The sequence spans 216 residues: NKG2-D type II integral membrane protein (216 aa).

The Cytoplasmic segment spans residues 1–51 (MGWIRGRRSRHSWEMSEFHNYNLDLKKSDFSTRWQKQRCPVVKSKCRENAS). A helical; Signal-anchor for type II membrane protein transmembrane segment spans residues 52–72 (PFFFCCFIAVAMGIRFIIMVT). At 73 to 216 (IWSAVFLNSL…NTYICMQRTV (144 aa)) the chain is on the extracellular side. Disulfide bonds link Cys-96–Cys-105 and Cys-99–Cys-110. The 116-residue stretch at 98-213 (PCPKNWICYK…STPNTYICMQ (116 aa)) folds into the C-type lectin domain. N-linked (GlcNAc...) asparagine glycans are attached at residues Asn-115, Asn-131, Asn-163, and Asn-202. 2 disulfide bridges follow: Cys-127–Cys-211 and Cys-189–Cys-203.

Homodimer; disulfide-linked. Heterohexamer composed of two subunits of KLRK1 and four subunits of HCST/DAP10. Interacts (via transmembrane domain) with HCST/DAP10 (via transmembrane domain); the interaction is required for KLRK1 NK cell surface and induces NK cell-mediated cytotoxicity. Can form disulfide-bonded heterodimer with CD94. Interacts with CEACAM1; recruits PTPN6 that dephosphorylates VAV1. In terms of tissue distribution, natural killer cells.

It localises to the cell membrane. Its function is as follows. Functions as an activating and costimulatory receptor involved in immunosurveillance upon binding to various cellular stress-inducible ligands displayed at the surface of autologous tumor cells and virus-infected cells. Provides both stimulatory and costimulatory innate immune responses on activated killer (NK) cells, leading to cytotoxic activity. Acts as a costimulatory receptor for T-cell receptor (TCR) in CD8(+) T-cell-mediated adaptive immune responses by amplifying T-cell activation. Stimulates perforin-mediated elimination of ligand-expressing tumor cells. Signaling involves calcium influx, culminating in the expression of TNF-alpha. Participates in NK cell-mediated bone marrow graft rejection. May play a regulatory role in differentiation and survival of NK cells. Binds to ligands belonging to various subfamilies of MHC class I-related glycoproteins. The sequence is that of NKG2-D type II integral membrane protein (KLRK1) from Pan troglodytes (Chimpanzee).